We begin with the raw amino-acid sequence, 297 residues long: Giardin subunit alpha-6 (297 aa).

4 Annexin repeats span residues 3–72, 74–146, 153–222, and 226–295; these read TTVQ…AYLW, KPGD…HWIL, FDID…AAHY, and HPAR…ILWR.

The protein belongs to the annexin family. Giardin subunit alpha subfamily.

Its subcellular location is the cytoplasm. The protein localises to the cytoskeleton. Giardins are involved in parasite attachment to the intestinal mucosa and in the cytoskeletal disassembly and reassembly that marks the transition from infectious trophozoite to transmissible cyst. They may interact with other cytoskeletal proteins such as microtubules in the microribbons or crossbridges, to maintain the integrity of the ventral disk. This Giardia intestinalis (Giardia lamblia) protein is Giardin subunit alpha-6.